The following is a 90-amino-acid chain: Sec-independent protein translocase protein TatA (90 aa).

The chain crosses the membrane as a helical span at residues 1-21 (MGISPWTLLIVLLIVLLVFGT). 2 stretches are compositionally biased toward basic and acidic residues: residues 42–59 (MKEGEEGAKEGEKSEPSK) and 70–90 (SGEGHTIEGERSEQPRDRHSS). The segment at 42–90 (MKEGEEGAKEGEKSEPSKLEQPPEEEKESGEGHTIEGERSEQPRDRHSS) is disordered.

It belongs to the TatA/E family. The Tat system comprises two distinct complexes: a TatABC complex, containing multiple copies of TatA, TatB and TatC subunits, and a separate TatA complex, containing only TatA subunits. Substrates initially bind to the TatABC complex, which probably triggers association of the separate TatA complex to form the active translocon.

It localises to the cell inner membrane. Part of the twin-arginine translocation (Tat) system that transports large folded proteins containing a characteristic twin-arginine motif in their signal peptide across membranes. TatA could form the protein-conducting channel of the Tat system. This Alkalilimnicola ehrlichii (strain ATCC BAA-1101 / DSM 17681 / MLHE-1) protein is Sec-independent protein translocase protein TatA.